Reading from the N-terminus, the 110-residue chain is MKSKVEILPSTLIYHELIGLEIQVIRSTNPALIGIRGRVIDETKNLLIIENSGPRELKIPKADSEFLFRIPTELSEKGRRSDTFVKIQGNLLLSQPENRIKNIKKLRKWG.

This sequence belongs to the eukaryotic/archaeal RNase P protein component 1 family. Consists of a catalytic RNA component and at least 4-5 protein subunits.

The protein localises to the cytoplasm. The enzyme catalyses Endonucleolytic cleavage of RNA, removing 5'-extranucleotides from tRNA precursor.. Part of ribonuclease P, a protein complex that generates mature tRNA molecules by cleaving their 5'-ends. The polypeptide is Ribonuclease P protein component 1 (Methanosarcina barkeri (strain Fusaro / DSM 804)).